We begin with the raw amino-acid sequence, 435 residues long: NADH-quinone oxidoreductase subunit D (435 aa).

Belongs to the complex I 49 kDa subunit family. In terms of assembly, NDH-1 is composed of 14 different subunits. Subunits NuoB, C, D, E, F, and G constitute the peripheral sector of the complex.

The protein localises to the cell inner membrane. It carries out the reaction a quinone + NADH + 5 H(+)(in) = a quinol + NAD(+) + 4 H(+)(out). Functionally, NDH-1 shuttles electrons from NADH, via FMN and iron-sulfur (Fe-S) centers, to quinones in the respiratory chain. The immediate electron acceptor for the enzyme in this species is believed to be ubiquinone. Couples the redox reaction to proton translocation (for every two electrons transferred, four hydrogen ions are translocated across the cytoplasmic membrane), and thus conserves the redox energy in a proton gradient. This chain is NADH-quinone oxidoreductase subunit D, found in Xylella fastidiosa (strain M23).